The primary structure comprises 173 residues: Adenine phosphoribosyltransferase (173 aa).

The protein belongs to the purine/pyrimidine phosphoribosyltransferase family. In terms of assembly, homodimer.

It is found in the cytoplasm. It carries out the reaction AMP + diphosphate = 5-phospho-alpha-D-ribose 1-diphosphate + adenine. It functions in the pathway purine metabolism; AMP biosynthesis via salvage pathway; AMP from adenine: step 1/1. Catalyzes a salvage reaction resulting in the formation of AMP, that is energically less costly than de novo synthesis. The protein is Adenine phosphoribosyltransferase of Solibacter usitatus (strain Ellin6076).